The primary structure comprises 139 residues: Probable transcription termination protein NusA (139 aa).

The KH domain maps to 31 to 97 (DDRVVYVVTA…YNVTVSENDT (67 aa)).

Belongs to the NusA family.

It is found in the cytoplasm. Functionally, participates in transcription termination. The chain is Probable transcription termination protein NusA from Halobacterium salinarum (strain ATCC 29341 / DSM 671 / R1).